Consider the following 209-residue polypeptide: Kynurenine formamidase (209 aa).

Residue tryptophan 19 participates in substrate binding. Zn(2+) contacts are provided by histidine 49, histidine 53, and aspartate 55. Histidine 59 acts as the Proton donor/acceptor in catalysis. Zn(2+) is bound by residues histidine 160 and glutamate 172.

Belongs to the Cyclase 1 superfamily. KynB family. Homodimer. Zn(2+) serves as cofactor.

It catalyses the reaction N-formyl-L-kynurenine + H2O = L-kynurenine + formate + H(+). Its pathway is amino-acid degradation; L-tryptophan degradation via kynurenine pathway; L-kynurenine from L-tryptophan: step 2/2. Catalyzes the hydrolysis of N-formyl-L-kynurenine to L-kynurenine, the second step in the kynurenine pathway of tryptophan degradation. The sequence is that of Kynurenine formamidase from Geobacillus thermodenitrificans (strain NG80-2).